Here is a 511-residue protein sequence, read N- to C-terminus: Exodeoxyribonuclease 7 large subunit (511 aa).

It belongs to the XseA family. In terms of assembly, heterooligomer composed of large and small subunits.

It localises to the cytoplasm. The enzyme catalyses Exonucleolytic cleavage in either 5'- to 3'- or 3'- to 5'-direction to yield nucleoside 5'-phosphates.. Bidirectionally degrades single-stranded DNA into large acid-insoluble oligonucleotides, which are then degraded further into small acid-soluble oligonucleotides. The polypeptide is Exodeoxyribonuclease 7 large subunit (Brucella canis (strain ATCC 23365 / NCTC 10854 / RM-666)).